The primary structure comprises 351 residues: MKAMAAEEEVDSADAGGGSGWLTGWLPTWCPTSTSHLKEAEEKMLKCVPCTYKKEPVRISNGNSIWTLMFSHNMSSKTPLVLLHGFGGGLGLWALNFEDLSTDRPVYAFDLLGFGRSSRPRFDSDAEEVENQFVESIEEWRCALRLDKMILLGHNLGGFLAAAYSLKYPSRVSHLILVEPWGFPERPDLADQERPIPVWIRALGAALTPFNPLAGLRIAGPFGLSLVQRLRPDFKRKYSSMFEDDTVTEYIYHCNVQTPSGETAFKNMTIPYGWAKRPMLQRIGGLHPDIPVSVIFGARSCIDGNSGTSIQSLRPKSYVKTIAILGAGHYVYADQPEEFNQKVKEICHTVD.

Positions 79-184 constitute an AB hydrolase-1 domain; the sequence is PLVLLHGFGG…LILVEPWGFP (106 aa). Phosphoserine is present on S124. An HXXXXD motif motif is present at residues 329–334; sequence HYVYAD.

Belongs to the peptidase S33 family. ABHD4/ABHD5 subfamily. In terms of assembly, interacts with ADRP and PLIN. Interacts with PNPLA2. Interacts with PLIN5; promotes interaction with PNPLA2.

Its subcellular location is the cytoplasm. The protein localises to the lipid droplet. It catalyses the reaction a 1-acyl-sn-glycero-3-phosphate + an acyl-CoA = a 1,2-diacyl-sn-glycero-3-phosphate + CoA. It carries out the reaction 1-(9Z-octadecenoyl)-sn-glycero-3-phosphate + (9Z)-octadecenoyl-CoA = 1,2-di-(9Z-octadecenoyl)-sn-glycero-3-phosphate + CoA. The catalysed reaction is 1-(9Z-octadecenoyl)-sn-glycero-3-phosphate + hexadecanoyl-CoA = 1-(9Z)-octadecenoyl-2-hexadecanoyl-sn-glycero-3-phosphate + CoA. The enzyme catalyses 1-(9Z-octadecenoyl)-sn-glycero-3-phosphate + octadecanoyl-CoA = 1-(9Z-octadecenoyl)-2-octadecanoyl-sn-glycero-3-phosphate + CoA. It catalyses the reaction 1-(9Z-octadecenoyl)-sn-glycero-3-phosphate + (5Z,8Z,11Z,14Z)-eicosatetraenoyl-CoA = 1-(9Z)-octadecenoyl-2-(5Z,8Z,11Z,14Z)-eicosatetraenoyl-sn-glycero-3-phosphate + CoA. It carries out the reaction eicosanoyl-CoA + 1-(9Z-octadecenoyl)-sn-glycero-3-phosphate = 1-(9Z)-octadecenoyl-2-eicosanoyl-sn-glycero-3-phosphate + CoA. The catalysed reaction is 1-hexadecanoyl-sn-glycero-3-phosphate + (9Z)-octadecenoyl-CoA = 1-hexadecanoyl-2-(9Z-octadecenoyl)-sn-glycero-3-phosphate + CoA. The enzyme catalyses 1-octadecanoyl-sn-glycero-3-phosphate + (9Z)-octadecenoyl-CoA = 1-octadecanoyl-2-(9Z-octadecenoyl)-sn-glycero-3-phosphate + CoA. It catalyses the reaction 1-(5Z,8Z,11Z,14Z-eicosatetraenoyl)-sn-glycero-3-phosphate + (9Z)-octadecenoyl-CoA = 1-(5Z,8Z,11Z,14Z)-eicosatetraenoyl-2-(9Z)-octadecenoyl-sn-glycero-3-phosphate + CoA. With respect to regulation, acyltransferase activity is inhibited by detergents such as Triton X-100 and 3-[(3-cholamidopropyl)dimethylammonio]-1-propanesulfonate (CHAPS). Acyltransferase activity is inhibited by the presence of magnesium and calcium. Functionally, coenzyme A-dependent lysophosphatidic acid acyltransferase that catalyzes the transfer of an acyl group on a lysophosphatidic acid. Functions preferentially with 1-oleoyl-lysophosphatidic acid followed by 1-palmitoyl-lysophosphatidic acid, 1-stearoyl-lysophosphatidic acid and 1-arachidonoyl-lysophosphatidic acid as lipid acceptor. Functions preferentially with arachidonoyl-CoA followed by oleoyl-CoA as acyl group donors. Functions in phosphatidic acid biosynthesis. May regulate the cellular storage of triacylglycerol through activation of the phospholipase PNPLA2. Involved in keratinocyte differentiation. Regulates lipid droplet fusion. The polypeptide is 1-acylglycerol-3-phosphate O-acyltransferase ABHD5 (Rattus norvegicus (Rat)).